A 49-amino-acid polypeptide reads, in one-letter code: uncharacterized protein (49 aa).

The signal sequence occupies residues 1–22; it reads MVFLLFLSFVLSSIFLVPLVYM.

The protein resides in the secreted. This is an uncharacterized protein from Dictyostelium discoideum (Social amoeba).